A 129-amino-acid chain; its full sequence is Small ribosomal subunit protein uS8 (129 aa).

This sequence belongs to the universal ribosomal protein uS8 family. In terms of assembly, part of the 30S ribosomal subunit.

In terms of biological role, one of the primary rRNA binding proteins, it binds directly to 16S rRNA central domain where it helps coordinate assembly of the platform of the 30S subunit. This chain is Small ribosomal subunit protein uS8, found in Methanothrix thermoacetophila (strain DSM 6194 / JCM 14653 / NBRC 101360 / PT) (Methanosaeta thermophila).